Consider the following 274-residue polypeptide: 2,3,4,5-tetrahydropyridine-2,6-dicarboxylate N-succinyltransferase (274 aa).

Arginine 104 and aspartate 141 together coordinate substrate.

This sequence belongs to the transferase hexapeptide repeat family. Homotrimer.

The protein localises to the cytoplasm. The catalysed reaction is (S)-2,3,4,5-tetrahydrodipicolinate + succinyl-CoA + H2O = (S)-2-succinylamino-6-oxoheptanedioate + CoA. It functions in the pathway amino-acid biosynthesis; L-lysine biosynthesis via DAP pathway; LL-2,6-diaminopimelate from (S)-tetrahydrodipicolinate (succinylase route): step 1/3. This Enterobacter sp. (strain 638) protein is 2,3,4,5-tetrahydropyridine-2,6-dicarboxylate N-succinyltransferase.